We begin with the raw amino-acid sequence, 431 residues long: V-type ATP synthase beta chain (431 aa).

Belongs to the ATPase alpha/beta chains family.

Its function is as follows. Produces ATP from ADP in the presence of a proton gradient across the membrane. The V-type beta chain is a regulatory subunit. In Treponema denticola (strain ATCC 35405 / DSM 14222 / CIP 103919 / JCM 8153 / KCTC 15104), this protein is V-type ATP synthase beta chain.